Consider the following 267-residue polypeptide: MEMO1 family protein MM_1761 (267 aa).

The protein belongs to the MEMO1 family.

This Methanosarcina mazei (strain ATCC BAA-159 / DSM 3647 / Goe1 / Go1 / JCM 11833 / OCM 88) (Methanosarcina frisia) protein is MEMO1 family protein MM_1761.